We begin with the raw amino-acid sequence, 136 residues long: Large ribosomal subunit protein uL16 (136 aa).

Belongs to the universal ribosomal protein uL16 family. As to quaternary structure, part of the 50S ribosomal subunit.

Binds 23S rRNA and is also seen to make contacts with the A and possibly P site tRNAs. This chain is Large ribosomal subunit protein uL16, found in Shewanella sediminis (strain HAW-EB3).